The primary structure comprises 155 residues: Sec-independent protein translocase protein TatB (155 aa).

A helical membrane pass occupies residues 1-21; sequence MFGMGFFEILVVLVVAIIFLG. A disordered region spans residues 109–155; it reads SLENNAPPKHLNKEVSNREVFHNEPPKEIELIANNNTTKHDKEKEHV. Composition is skewed to basic and acidic residues over residues 119 to 138 and 146 to 155; these read LNKE…KEIE and TKHDKEKEHV.

Belongs to the TatB family. The Tat system comprises two distinct complexes: a TatABC complex, containing multiple copies of TatA, TatB and TatC subunits, and a separate TatA complex, containing only TatA subunits. Substrates initially bind to the TatABC complex, which probably triggers association of the separate TatA complex to form the active translocon.

Its subcellular location is the cell inner membrane. Functionally, part of the twin-arginine translocation (Tat) system that transports large folded proteins containing a characteristic twin-arginine motif in their signal peptide across membranes. Together with TatC, TatB is part of a receptor directly interacting with Tat signal peptides. TatB may form an oligomeric binding site that transiently accommodates folded Tat precursor proteins before their translocation. The chain is Sec-independent protein translocase protein TatB from Helicobacter acinonychis (strain Sheeba).